A 405-amino-acid polypeptide reads, in one-letter code: L-carnitine CoA-transferase (405 aa).

Residues Lys97 and Arg104 each coordinate CoA. Asp169 functions as the Nucleophile in the catalytic mechanism.

Belongs to the CoA-transferase III family. CaiB subfamily. Homodimer.

Its subcellular location is the cytoplasm. The catalysed reaction is crotonobetainyl-CoA + (R)-carnitine = crotonobetaine + (R)-carnitinyl-CoA. It carries out the reaction 4-(trimethylamino)butanoyl-CoA + (R)-carnitine = (R)-carnitinyl-CoA + 4-(trimethylamino)butanoate. It participates in amine and polyamine metabolism; carnitine metabolism. Its function is as follows. Catalyzes the reversible transfer of the CoA moiety from gamma-butyrobetainyl-CoA to L-carnitine to generate L-carnitinyl-CoA and gamma-butyrobetaine. Is also able to catalyze the reversible transfer of the CoA moiety from gamma-butyrobetainyl-CoA or L-carnitinyl-CoA to crotonobetaine to generate crotonobetainyl-CoA. In Escherichia coli O17:K52:H18 (strain UMN026 / ExPEC), this protein is L-carnitine CoA-transferase.